Reading from the N-terminus, the 374-residue chain is RNA polymerase sigma factor SigA (374 aa).

Residues 141 to 211 (LAEANLRLVV…TRAIADQART (71 aa)) are sigma-70 factor domain-2. Residues 165–168 (DLIQ) carry the Interaction with polymerase core subunit RpoC motif. The tract at residues 220–296 (ETINKLIRVQ…DQDATSPSDH (77 aa)) is sigma-70 factor domain-3. The sigma-70 factor domain-4 stretch occupies residues 309-362 (VLDTLTDREENVLRLRFGLDDGRTRTLEEVGRVFGVTRERIRQIEAKALRKLRH). Residues 335–354 (LEEVGRVFGVTRERIRQIEA) constitute a DNA-binding region (H-T-H motif).

Belongs to the sigma-70 factor family. RpoD/SigA subfamily. In terms of assembly, interacts transiently with the RNA polymerase catalytic core.

Its subcellular location is the cytoplasm. Its function is as follows. Sigma factors are initiation factors that promote the attachment of RNA polymerase to specific initiation sites and are then released. This sigma factor is the primary sigma factor during exponential growth. The chain is RNA polymerase sigma factor SigA from Listeria innocua serovar 6a (strain ATCC BAA-680 / CLIP 11262).